Here is a 388-residue protein sequence, read N- to C-terminus: Na(+)/H(+) antiporter NhaA (388 aa).

The next 12 membrane-spanning stretches (helical) occupy residues 13 to 33 (AAGG…ANTP), 36 to 56 (GIYH…LEIA), 59 to 79 (LLLW…GLEV), 95 to 115 (VFPA…YLMF), 125 to 145 (GWAI…ALLG), 154 to 174 (VFLL…IALF), 179 to 199 (VSMA…FMNW), 213 to 233 (LVLW…GVII), 259 to 279 (VAFL…LQGV), 287 to 307 (LLPV…IFTF), 328 to 348 (VFAV…IASL), and 363 to 383 (LGIL…LRMS).

The protein belongs to the NhaA Na(+)/H(+) (TC 2.A.33) antiporter family.

The protein localises to the cell inner membrane. The enzyme catalyses Na(+)(in) + 2 H(+)(out) = Na(+)(out) + 2 H(+)(in). Na(+)/H(+) antiporter that extrudes sodium in exchange for external protons. The polypeptide is Na(+)/H(+) antiporter NhaA (Serratia proteamaculans (strain 568)).